The following is a 122-amino-acid chain: Flagellar protein FliT (122 aa).

The interval 1–50 is required for homodimerization; that stretch reads MTSTVEFINRWQRIALLSQSLLELAQRGEWDLLLQQEVSYLQRIETVMEK. The tract at residues 60-98 is fliD binding; it reads IQDMVAGYIKQTLDNEQLLKGLLQQRLDELSSLIGQSTR.

This sequence belongs to the FliT family. As to quaternary structure, homodimer. Interacts with FliD and FlhC.

The protein localises to the cytoplasm. The protein resides in the cytosol. In terms of biological role, dual-function protein that regulates the transcription of class 2 flagellar operons and that also acts as an export chaperone for the filament-capping protein FliD. As a transcriptional regulator, acts as an anti-FlhDC factor; it directly binds FlhC, thus inhibiting the binding of the FlhC/FlhD complex to class 2 promoters, resulting in decreased expression of class 2 flagellar operons. As a chaperone, effects FliD transition to the membrane by preventing its premature polymerization, and by directing it to the export apparatus. This chain is Flagellar protein FliT, found in Salmonella paratyphi A (strain AKU_12601).